Consider the following 185-residue polypeptide: MADKTGTLWYVMGPSGAGKDSLLAYARQRLPGGVMFAHRYITRPADAGGENHVALSREEFDAREAGGCFALVWRRHGLAYGLGVETELWLGQGMDVVVNGSRSSLPLAMARFPTLRPLWITASPEVLAVRLRQRARECGEVIERRLAEAASFAPPAGCEVLVNDGALAQAGDTLLRWLRGGRRVC.

13–20 (GPSGAGKD) contacts ATP.

This sequence belongs to the ribose 1,5-bisphosphokinase family.

It carries out the reaction alpha-D-ribose 1,5-bisphosphate + ATP = 5-phospho-alpha-D-ribose 1-diphosphate + ADP. Its pathway is metabolic intermediate biosynthesis; 5-phospho-alpha-D-ribose 1-diphosphate biosynthesis; 5-phospho-alpha-D-ribose 1-diphosphate from D-ribose 5-phosphate (route II): step 3/3. Catalyzes the phosphorylation of ribose 1,5-bisphosphate to 5-phospho-D-ribosyl alpha-1-diphosphate (PRPP). The polypeptide is Ribose 1,5-bisphosphate phosphokinase PhnN (Chromobacterium violaceum (strain ATCC 12472 / DSM 30191 / JCM 1249 / CCUG 213 / NBRC 12614 / NCIMB 9131 / NCTC 9757 / MK)).